We begin with the raw amino-acid sequence, 473 residues long: Lactococcin A secretion protein LcnD-like (473 aa).

Topologically, residues 1 to 21 (MFDKKLLESSELYDKRYRNFS) are cytoplasmic. A helical membrane pass occupies residues 22–44 (TLIILPLFILLVGGVIFTFFAHK). Over 45–473 (ELTVISTGSI…FLDKIMGRTS (429 aa)) the chain is Extracellular.

It belongs to the membrane fusion protein (MFP) (TC 8.A.1) family.

It is found in the cell membrane. Functionally, involved in the secretion of a lactococcin. The polypeptide is Lactococcin A secretion protein LcnD-like (lcnD) (Lactococcus lactis subsp. lactis (strain IL1403) (Streptococcus lactis)).